We begin with the raw amino-acid sequence, 394 residues long: Na(+)/H(+) antiporter NhaA (394 aa).

A run of 11 helical transmembrane segments spans residues 14 to 34, 59 to 79, 95 to 115, 125 to 145, 154 to 174, 179 to 199, 213 to 233, 254 to 274, 292 to 312, 328 to 348, and 363 to 383; these read AGGL…NSAL, LLLW…GLEV, VFPA…YLLF, GWAI…ALLG, VFLL…IALF, VSLQ…YMNW, LVLW…GVIV, GLHP…NAGV, IATG…WLAV, IFAV…IASL, and LGIL…LRLV.

Belongs to the NhaA Na(+)/H(+) (TC 2.A.33) antiporter family.

It is found in the cell inner membrane. It carries out the reaction Na(+)(in) + 2 H(+)(out) = Na(+)(out) + 2 H(+)(in). Na(+)/H(+) antiporter that extrudes sodium in exchange for external protons. The polypeptide is Na(+)/H(+) antiporter NhaA (Yersinia pestis bv. Antiqua (strain Angola)).